Here is a 428-residue protein sequence, read N- to C-terminus: 3-phosphoshikimate 1-carboxyvinyltransferase (428 aa).

The 3-phosphoshikimate site is built by K21, S22, and R26. K21 contributes to the phosphoenolpyruvate binding site. Phosphoenolpyruvate is bound by residues G92 and R120. Positions 165, 167, 313, and 340 each coordinate 3-phosphoshikimate. Q167 provides a ligand contact to phosphoenolpyruvate. The Proton acceptor role is filled by D313. Phosphoenolpyruvate contacts are provided by R344 and R386.

It belongs to the EPSP synthase family. As to quaternary structure, monomer.

It is found in the cytoplasm. It catalyses the reaction 3-phosphoshikimate + phosphoenolpyruvate = 5-O-(1-carboxyvinyl)-3-phosphoshikimate + phosphate. Its pathway is metabolic intermediate biosynthesis; chorismate biosynthesis; chorismate from D-erythrose 4-phosphate and phosphoenolpyruvate: step 6/7. Catalyzes the transfer of the enolpyruvyl moiety of phosphoenolpyruvate (PEP) to the 5-hydroxyl of shikimate-3-phosphate (S3P) to produce enolpyruvyl shikimate-3-phosphate and inorganic phosphate. In Carboxydothermus hydrogenoformans (strain ATCC BAA-161 / DSM 6008 / Z-2901), this protein is 3-phosphoshikimate 1-carboxyvinyltransferase.